The primary structure comprises 351 residues: Glycerol-3-phosphate dehydrogenase [NAD(P)+] (351 aa).

NADPH is bound by residues S12, W13, H33, and K114. Sn-glycerol 3-phosphate-binding residues include K114, G145, and S147. A149 contacts NADPH. Sn-glycerol 3-phosphate contacts are provided by K200, D253, S263, R264, and N265. Catalysis depends on K200, which acts as the Proton acceptor. R264 contributes to the NADPH binding site. V288 and E290 together coordinate NADPH.

It belongs to the NAD-dependent glycerol-3-phosphate dehydrogenase family.

The protein localises to the cytoplasm. The catalysed reaction is sn-glycerol 3-phosphate + NAD(+) = dihydroxyacetone phosphate + NADH + H(+). It catalyses the reaction sn-glycerol 3-phosphate + NADP(+) = dihydroxyacetone phosphate + NADPH + H(+). The protein operates within membrane lipid metabolism; glycerophospholipid metabolism. Functionally, catalyzes the reduction of the glycolytic intermediate dihydroxyacetone phosphate (DHAP) to sn-glycerol 3-phosphate (G3P), the key precursor for phospholipid synthesis. The sequence is that of Glycerol-3-phosphate dehydrogenase [NAD(P)+] from Lacticaseibacillus casei (strain BL23) (Lactobacillus casei).